Consider the following 256-residue polypeptide: MVATGGQAQDQSQNQEPDVLNPTSAVTGLPQKRYYRQRAHSNPIADHSFDYPARPEDVDWRSMYPSIQQGQQVSFADVGCGYGGFLVTLGEMFPEKLSIGMEIRVKVSDYVVDRIAALRRRSADTGAYQNIACLRTNAMKYLPNYFSKGQLEKMFFLYPDPHFKRAKHKWRIINQALLSEYAYVLRKGGLVYTMTDVEDLHKWIVTHMEEHPLYERLTEEEANADPITPKLYQSSEEGAKVVRNKGDHFLAIFRRL.

Residues 1–25 (MVATGGQAQDQSQNQEPDVLNPTSA) form a disordered region. S-adenosyl-L-methionine-binding positions include Gly-79, 102–103 (EI), 137–138 (NA), and Leu-157. The active site involves Asp-160. Residue 235-237 (SEE) participates in S-adenosyl-L-methionine binding.

This sequence belongs to the class I-like SAM-binding methyltransferase superfamily. TrmB family.

The protein localises to the nucleus. It catalyses the reaction guanosine(46) in tRNA + S-adenosyl-L-methionine = N(7)-methylguanosine(46) in tRNA + S-adenosyl-L-homocysteine. It participates in tRNA modification; N(7)-methylguanine-tRNA biosynthesis. In terms of biological role, catalyzes the formation of N(7)-methylguanine at position 46 (m7G46) in tRNA. In Drosophila simulans (Fruit fly), this protein is tRNA (guanine-N(7)-)-methyltransferase.